Reading from the N-terminus, the 509-residue chain is Leucine-rich repeat-containing protein 14 (509 aa).

The stretch at 111-146 is one LRR 1; degenerate repeat; sequence RQRLRLLDMTGMQEEGLEQNPDTMSLWSRTVTLAKA. An LRR 2; degenerate repeat occupies 210–234; that stretch reads RLQCRDFRAEELSLRSTAGLLELLN. An LRR 3; degenerate repeat occupies 235 to 262; that stretch reads PGSVRQIDLRFNNLGLSGLNVLLPHMAK. The stretch at 263–298 is one LRR 4; degenerate repeat; it reads FSHLQSLKLPYSNVDVRRLSPVMEEGLQSFASQLGQ. 5 LRR repeats span residues 299-323, 324-355, 356-374, 380-407, and 408-432; these read LGAL…LGGL, QRPL…SSLR, KLDL…PFLH, SGHL…ILCR, and CSWL…VLQN.

Belongs to the PRAME family. LRRC14 subfamily.

It localises to the cytoplasm. In Xenopus laevis (African clawed frog), this protein is Leucine-rich repeat-containing protein 14.